A 392-amino-acid polypeptide reads, in one-letter code: Magnesium-chelatase 38 kDa subunit (392 aa).

A compositionally biased stretch (low complexity) spans 1 to 17; that stretch reads MTQTANAAKKTTSTKAS. Residues 1 to 21 are disordered; the sequence is MTQTANAAKKTTSTKASAAKE. ATP is bound at residue 80–87; sequence GHRGTGKS.

This sequence belongs to the Mg-chelatase subunits D/I family.

It catalyses the reaction protoporphyrin IX + Mg(2+) + ATP + H2O = Mg-protoporphyrin IX + ADP + phosphate + 3 H(+). Its pathway is porphyrin-containing compound metabolism; bacteriochlorophyll biosynthesis. Involved in bacteriochlorophyll biosynthesis; introduces a magnesium ion into protoporphyrin IX to yield Mg-protoporphyrin IX. The polypeptide is Magnesium-chelatase 38 kDa subunit (bchI) (Chlorobaculum tepidum (strain ATCC 49652 / DSM 12025 / NBRC 103806 / TLS) (Chlorobium tepidum)).